A 289-amino-acid polypeptide reads, in one-letter code: Probable ABC transporter permease protein BruAb2_0483 (289 aa).

The next 6 membrane-spanning stretches (helical) occupy residues 9–29, 70–90, 99–119, 144–166, 213–233, and 258–278; these read FLIL…VVHL, VWTV…AIIL, VARV…AIFW, IQWL…LVTV, IAIV…WVMT, and FGEA…FTVI. Residues 65-279 form the ABC transmembrane type-1 domain; the sequence is LWRTAVWTVA…AILLVFTVIY (215 aa).

This sequence belongs to the binding-protein-dependent transport system permease family. As to quaternary structure, the complex is composed of two ATP-binding proteins (BruAb2_0487), two transmembrane proteins (BruAb2_0483) and a solute-binding protein (BruAb2_0484).

Its subcellular location is the cell inner membrane. Probably part of an ABC transporter complex. Probably responsible for the translocation of the substrate across the membrane. The sequence is that of Probable ABC transporter permease protein BruAb2_0483 from Brucella abortus biovar 1 (strain 9-941).